The sequence spans 359 residues: 4-galactosyl-N-acetylglucosaminide 3-alpha-L-fucosyltransferase 9 (359 aa).

Topologically, residues 1-11 (MTSTSKGILRP) are cytoplasmic. Residues 12 to 32 (FLIVCVILACFMACLLIYIKP) traverse the membrane as a helical; Signal-anchor for type II membrane protein segment. At 33 to 359 (TNSWVFSPME…VGNLEKWFWN (327 aa)) the chain is on the lumenal side. A glycan (N-linked (GlcNAc...) asparagine) is linked at Asn-62. Residues 63–168 (ETTILVWVWP…RRDSDIQVPY (106 aa)) are acceptor-binding. Position 75 (Gln-75) interacts with a beta-D-galactosyl-(1-&gt;4)-N-acetyl-beta-D-glucosaminyl derivative. Intrachain disulfides connect Cys-82–Cys-335, Cys-91–Cys-338, and Cys-190–Cys-238. N-linked (GlcNAc...) asparagine glycosylation is present at Asn-101. Glu-137 provides a ligand contact to a beta-D-galactosyl-(1-&gt;4)-N-acetyl-beta-D-glucosaminyl derivative. Glu-137 serves as the catalytic Nucleophile. Residue Glu-137 participates in GDP-beta-L-fucose binding. N-linked (GlcNAc...) asparagine glycosylation is present at Asn-153. Residues Tyr-168, Val-192, Ser-194, Asn-195, Arg-202, Val-226, Tyr-241, Asn-246, Tyr-252, Glu-255, and Lys-256 each contribute to the GDP-beta-L-fucose site. A donor-binding region spans residues 169–326 (GFLTVSTNPF…NWRKDFTVNL (158 aa)). The segment at 327-359 (PRFWESHACLACDHVKRHQEYKSVGNLEKWFWN) is acceptor-binding.

It belongs to the glycosyltransferase 10 family. In terms of assembly, homodimer. Post-translationally, N-glycosylated with complex-type N-glycans.

Its subcellular location is the golgi apparatus. It is found in the trans-Golgi network membrane. The protein localises to the golgi apparatus membrane. It catalyses the reaction a beta-D-galactosyl-(1-&gt;4)-N-acetyl-beta-D-glucosaminyl derivative + GDP-beta-L-fucose = a beta-D-galactosyl-(1-&gt;4)-[alpha-L-fucosyl-(1-&gt;3)]-N-acetyl-beta-D-glucosaminyl derivative + GDP + H(+). The catalysed reaction is an alpha-Neu5Ac-(2-&gt;3)-beta-D-Gal-(1-&gt;4)-beta-D-GlcNAc-(1-&gt;3)-beta-D-Gal-(1-&gt;4)-beta-D-GlcNAc derivative + GDP-beta-L-fucose = an alpha-Neu5Ac-(2-&gt;3)-beta-D-Gal-(1-&gt;4)-beta-D-GlcNAc-(1-&gt;3)-beta-D-Gal-(1-&gt;4)-[alpha-L-Fuc-(1-&gt;3)]-beta-D-GlcNAc derivative + GDP + H(+). It carries out the reaction alpha-N-glycoloylneuraminosyl-(2-&gt;3)-beta-D-galactosyl-(1-&gt;4)-N-acetyl-beta-D-glucosaminyl-(1-&gt;3)-beta-D-galactosyl-(1-&gt;4)-N-acetyl-beta-D-glucosaminyl-(1-&gt;3)-beta-D-galactosyl-(1-&gt;4)-beta-D-glucosyl-(1&lt;-&gt;1')-ceramide + GDP-beta-L-fucose = alpha-N-glycoloylneuraminosyl-(2-&gt;3)-beta-D-galactosyl-(1-&gt;4)-N-acetyl-beta-D-glucosaminyl-(1-&gt;3)-beta-D-galactosyl-(1-&gt;4)-[alpha-L-fucosyl-(1-&gt;3)]-N-acetyl-beta-D-glucosaminyl-(1-&gt;3)-beta-D-galactosyl-(1-&gt;4)-beta-D-glucosyl-(1&lt;-&gt;1')-ceramide + GDP + H(+). The enzyme catalyses alpha-D-galactosyl-(1-&gt;3)-beta-D-galactosyl-(1-&gt;4)-N-acetyl-beta-D-glucosaminyl-(1-&gt;3)-beta-D-galactosyl-(1-&gt;4)-beta-D-glucosyl-(1&lt;-&gt;1')-ceramide + GDP-beta-L-fucose = a neolactoside IV(3)-alpha-Gal,III(3)-alpha-Fuc-nLc4Cer + GDP + H(+). It catalyses the reaction a neolactoside nLc4Cer + GDP-beta-L-fucose = a neolactoside III(3)-alpha-Fuc-nLc4Cer + GDP + H(+). The catalysed reaction is an N-acetyl-alpha-neuraminyl-(2-&gt;3)-beta-D-galactosyl-(1-&gt;4)-N-acetyl-beta-D-glucosaminyl derivative + GDP-beta-L-fucose = an alpha-Neu5Ac-(2-&gt;3)-beta-D-Gal-(1-&gt;4)-[alpha-L-Fuc-(1-&gt;3)]-beta-D-GlcNAc derivative + GDP + H(+). It carries out the reaction beta-D-Gal-(1-&gt;4)-beta-D-GlcNAc-(1-&gt;3)-beta-D-Gal-(1-&gt;4)-D-Glc + GDP-beta-L-fucose = beta-D-Gal-(1-&gt;4)-[alpha-L-Fuc-(1-&gt;3)]-beta-D-GlcNAc-(1-&gt;3)-beta-D-Gal-(1-&gt;4)-D-Glc + GDP + H(+). The enzyme catalyses an alpha-L-Fuc-(1-&gt;2)-beta-D-Gal-(1-&gt;4)-beta-D-GlcNAc derivative + GDP-beta-L-fucose = an alpha-L-Fuc-(1-&gt;2)-beta-D-Gal-(1-&gt;4)-[alpha-L-Fuc-(1-&gt;3)]-beta-D-GlcNAc derivative + GDP + H(+). Its pathway is protein modification; protein glycosylation. It functions in the pathway glycolipid biosynthesis. Its activity is regulated as follows. Activated by Mn2+. Catalyzes alpha(1-&gt;3) linkage of fucosyl moiety transferred from GDP-beta-L-fucose to N-acetyl glucosamine (GlcNAc) within type 2 lactosamine (LacNAc, beta-D-Gal-(1-&gt;4)-beta-D-GlcNAc-) glycan attached to glycolipids and N- or O-linked glycoproteins. Fucosylates distal type 2 LacNAc and its fucosylated (H-type 2 LacNAc) and sialylated (sialyl-type 2 LacNAc) derivatives to form Lewis x (Lex) (CD15) and Lewis y (Ley) antigenic epitopes involved in cell adhesion and differentiation. Generates Lex epitopes in the brain, presumably playing a role in the maintenance of neuronal stemness and neurite outgrowth in progenitor neural cells. Fucosylates the internal type 2 LacNAc unit of the polylactosamine chain to form VIM-2 antigen that serves as recognition epitope for SELE. Can also modify milk oligosaccharides in particular type 2 tetrasaccharide LNnT. The sequence is that of 4-galactosyl-N-acetylglucosaminide 3-alpha-L-fucosyltransferase 9 from Cricetulus griseus (Chinese hamster).